Here is a 578-residue protein sequence, read N- to C-terminus: Proline--tRNA ligase (578 aa).

This sequence belongs to the class-II aminoacyl-tRNA synthetase family. ProS type 1 subfamily. In terms of assembly, homodimer.

It localises to the cytoplasm. It catalyses the reaction tRNA(Pro) + L-proline + ATP = L-prolyl-tRNA(Pro) + AMP + diphosphate. Its function is as follows. Catalyzes the attachment of proline to tRNA(Pro) in a two-step reaction: proline is first activated by ATP to form Pro-AMP and then transferred to the acceptor end of tRNA(Pro). As ProRS can inadvertently accommodate and process non-cognate amino acids such as alanine and cysteine, to avoid such errors it has two additional distinct editing activities against alanine. One activity is designated as 'pretransfer' editing and involves the tRNA(Pro)-independent hydrolysis of activated Ala-AMP. The other activity is designated 'posttransfer' editing and involves deacylation of mischarged Ala-tRNA(Pro). The misacylated Cys-tRNA(Pro) is not edited by ProRS. The polypeptide is Proline--tRNA ligase (Burkholderia ambifaria (strain ATCC BAA-244 / DSM 16087 / CCUG 44356 / LMG 19182 / AMMD) (Burkholderia cepacia (strain AMMD))).